Here is a 429-residue protein sequence, read N- to C-terminus: D-amino acid dehydrogenase (429 aa).

FAD is bound at residue 3 to 17 (VVVLGSGVVGVTSAY).

The protein belongs to the DadA oxidoreductase family. It depends on FAD as a cofactor.

The catalysed reaction is a D-alpha-amino acid + A + H2O = a 2-oxocarboxylate + AH2 + NH4(+). It participates in amino-acid degradation; D-alanine degradation; NH(3) and pyruvate from D-alanine: step 1/1. Functionally, oxidative deamination of D-amino acids. This chain is D-amino acid dehydrogenase, found in Paraburkholderia xenovorans (strain LB400).